The sequence spans 703 residues: Hyperosmolality-gated Ca2+ permeable channel 2.3 (703 aa).

Topologically, residues 1 to 3 (MLL) are extracellular. Residues 4 to 26 (SALLTSVGINLGLCFLFFTLYSI) traverse the membrane as a helical segment. The Cytoplasmic segment spans residues 27–81 (LRKQPSNVTVYGPRLVKKDGKSQQSNEFNLERLLPTAGWVKRALEPTNDEILSNL). Residues 82-115 (GLDALVFIRVFVFSIRVFSFASVVGIFILLPVNY) traverse the membrane as a helical segment. The Extracellular portion of the chain corresponds to 116–143 (MGTEFEEFFDLPKKSMDNFSISNVNDGS). A helical membrane pass occupies residues 144–165 (NKLWIHFCAIYIFTAVVCSLLY). Residues 166–355 (YEHKYILTKR…TASFVRRWIS (190 aa)) are Cytoplasmic-facing. Positions 228-300 (RTDKLKVLMN…LKQSLLAGEE (73 aa)) form a coiled coil. Residues 356 to 382 (NVVVLVAFVALLILYIVPVVLVQGLAN) form a helical membrane-spanning segment. Topologically, residues 383 to 410 (LHQLETWFPFLKGILNMKIVSQVITGYL) are extracellular. The chain crosses the membrane as a helical span at residues 411–432 (PSLIFQLFLLIVPPIMLLLSSM). At 433 to 436 (QGFI) the chain is on the cytoplasmic side. Residues 437–463 (SHSQIEKSACIKLLIFTVWNSFFANVL) traverse the membrane as a helical segment. At 464-489 (SGSALYRVNVFLEPKTIPRVLAAAVP) the chain is on the extracellular side. The helical transmembrane segment at 490–512 (AQASFFVSYVVTSGWTGLSSEIL) threads the bilayer. Over 513–540 (RLVPLLWSFITKLFGKEDDKEFEVPSTP) the chain is Cytoplasmic. A helical transmembrane segment spans residues 541–561 (FCQEIPRILFFGLLGITYFFL). Position 562 (Ser562) is a topological domain, extracellular. The chain crosses the membrane as a helical span at residues 563–586 (PLILPFLLVYYCLGYIIYRNQLLN). At 587 to 598 (VYAAKYETGGKF) the chain is on the cytoplasmic side. A helical membrane pass occupies residues 599-623 (WPIVHSYTIFSLVLMHIIAVGLFGL). The Extracellular portion of the chain corresponds to 624–626 (KEL). The chain crosses the membrane as a helical span at residues 627 to 655 (PVASSLTIPLPVLTVLFSIYCQRRFLPNF). The Cytoplasmic portion of the chain corresponds to 656–703 (KSYPTQCLVNKDKADEREQNMSEFYSELVVAYRDPALSASQDSRDISP).

This sequence belongs to the CSC1 (TC 1.A.17) family. In terms of assembly, homodimer.

Its subcellular location is the membrane. Acts as an osmosensitive calcium-permeable cation channel. The chain is Hyperosmolality-gated Ca2+ permeable channel 2.3 from Arabidopsis thaliana (Mouse-ear cress).